Consider the following 54-residue polypeptide: Large ribosomal subunit protein bL33A (54 aa).

It belongs to the bacterial ribosomal protein bL33 family.

The chain is Large ribosomal subunit protein bL33A from Myxococcus xanthus (strain DK1622).